Here is a 146-residue protein sequence, read N- to C-terminus: Transcriptional regulator MraZ (146 aa).

SpoVT-AbrB domains lie at 4–46 and 75–118; these read SYEK…SKKS and TIEV…SKEK.

Belongs to the MraZ family. In terms of assembly, forms oligomers.

Its subcellular location is the cytoplasm. It localises to the nucleoid. The chain is Transcriptional regulator MraZ from Mycoplasma mobile (strain ATCC 43663 / 163K / NCTC 11711) (Mesomycoplasma mobile).